Reading from the N-terminus, the 2033-residue chain is Envoplakin (2033 aa).

The span at 1–27 shows a compositional bias: low complexity; that stretch reads MFKGLSKGSQGKGSPKGSPAKGSPKGS. 2 disordered regions span residues 1–37 and 65–85; these read MFKG…AATQ and QQDR…ETGR. Residues 1–841 form a globular 1 region; that stretch reads MFKGLSKGSQ…LEPTLAVSAP (841 aa). The interval 12–28 is 4 X 4 AA tandem repeats of K-G-S-P; the sequence is KGSPKGSPAKGSPKGSP. Residues 71 to 84 show a composition bias toward polar residues; sequence SEQSQALQHQQETG. A Spectrin repeat occupies 229–330; the sequence is YTHLQGCTRQ…LCICQETQLQ (102 aa). Basic and acidic residues predominate over residues 388–401; the sequence is TERATGDLQRRSRD. Disordered regions lie at residues 388 to 418 and 891 to 916; these read TERA…PLHV and SEDI…ESEA. The SH3 domain occupies 413–470; sequence QQPLHVDSICDWDSGEVQLLQGERYKLVDNTDPHAWVVQGPGGETKRAPAACFCIPAP. The tract at residues 842–1673 is central fibrous rod domain; sequence KRPRVAPLQE…AKVSREELSQ (832 aa). A coiled-coil region spans residues 845-1135; that stretch reads RVAPLQESIQ…AISSVEPKVI (291 aa). The span at 891–902 shows a compositional bias: basic and acidic residues; that stretch reads SEDIRRTHDAKQ. The stretch at 1185 to 1226 is one Plectin 1 repeat; that stretch reads KQRPKVQLQERVHEIFQVDPETEQEITRLKAKLQEMAGKRSG. At S1575 the chain carries Phosphoserine. The segment covering 1614-1623 has biased composition (low complexity); the sequence is QEESKLLSQK. Residues 1614-1636 form a disordered region; the sequence is QEESKLLSQKTESERQKAAQRGQ. Residues 1674-2033 are globular 2; the sequence is ETQTRETNLS…ASPTVPRSLR (360 aa). One copy of the Plectin 2 repeat lies at 1678-1713; it reads RETNLSTKISILEPETGKDMSPYEAYKRGIIDRGQY. At S1799 the chain carries Phosphoserine. Plectin repeat units lie at residues 1818 to 1855, 1856 to 1893, 1894 to 1931, 1932 to 1969, and 1970 to 2007; these read LGLG…PITG, QKLL…NTST, QRLL…RESV, LPHL…EELA, and QLLQ…PLSG. S2025 bears the Phosphoserine mark.

This sequence belongs to the plakin or cytolinker family. In terms of assembly, may form a homodimer or a heterodimer with PPL. Exclusively expressed in stratified squamous epithelia.

Its subcellular location is the cell junction. The protein localises to the desmosome. It is found in the cornified envelope. The protein resides in the cytoplasm. It localises to the cytoskeleton. In terms of biological role, component of the cornified envelope of keratinocytes. May link the cornified envelope to desmosomes and intermediate filaments. The polypeptide is Envoplakin (EVPL) (Homo sapiens (Human)).